Consider the following 243-residue polypeptide: High affinity immunoglobulin epsilon receptor subunit beta (243 aa).

The segment at 1–48 (MDTENKSRADLALPNPQESPSAPDIELLEASPPAKALPEKPASPPPQQ) is disordered. Residues 1 to 59 (MDTENKSRADLALPNPQESPSAPDIELLEASPPAKALPEKPASPPPQQTWQSFLKKELE) are Cytoplasmic-facing. The chain crosses the membrane as a helical span at residues 60–79 (FLGVTQVLVGLICLCFGTVV). The Extracellular segment spans residues 80 to 97 (CSTLQTSDFDDEVLLLYR). A helical membrane pass occupies residues 98–117 (AGYPFWGAVLFVLSGFLSIM). Residues 118 to 130 (SERKNTLYLVRGS) are Cytoplasmic-facing. Residues 131–150 (LGANIVSSIAAGLGIAILIL) form a helical membrane-spanning segment. Residues 151-179 (NLSNNSAYMNYCKDITEDDGCFVTSFITE) lie on the Extracellular side of the membrane. The helical transmembrane segment at 180-199 (LVLMLLFLTILAFCSAVLLI) threads the bilayer. Residues 200-243 (IYRIGQEFERSKVPDDRLYEELHVYSPIYSALEDTREASAPVVS) lie on the Cytoplasmic side of the membrane. Phosphotyrosine occurs at positions 218 and 224. Residue Ser-225 is modified to Phosphoserine. Phosphotyrosine is present on Tyr-228.

The protein belongs to the MS4A family. In terms of assembly, tetramer of an alpha chain, a beta chain, and two disulfide linked gamma chains. Binds LILRB1. Interacts with FES/FPS and LYN. Interacts with FGR. Phosphorylated on tyrosine residues by LYN.

The protein localises to the membrane. Functionally, high affinity receptor that binds to the Fc region of immunoglobulins epsilon. Aggregation of FCER1 by multivalent antigens is required for the full mast cell response, including the release of preformed mediators (such as histamine) by degranulation and de novo production of lipid mediators and cytokines. Also mediates the secretion of important lymphokines. Binding of allergen to receptor-bound IgE leads to cell activation and the release of mediators responsible for the manifestations of allergy. This is High affinity immunoglobulin epsilon receptor subunit beta (Ms4a2) from Rattus norvegicus (Rat).